A 451-amino-acid polypeptide reads, in one-letter code: Potassium/sodium uptake protein NtpJ (451 aa).

Transmembrane regions (helical) follow at residues 18–38, 46–66, 78–98, 133–153, 162–182, 192–212, 230–250, 293–313, 350–370, 380–400, and 410–430; these read IAAG…LPFF, HFID…LTTL, FLIM…PILF, ILKF…VVFI, IWFS…DLLG, VYLI…FIVW, VALS…LITE, LILT…AGGL, ALTL…VLSV, IEYI…TMGL, and LVII…VFSL.

The protein belongs to the TrkH potassium transport family.

It is found in the cell membrane. Functionally, mediates electrogenic transport of potassium as well as sodium. Acts probably as a potassium-sodium cotransporter. Major sodium reentry pathway at high pH values. This Enterococcus hirae (strain ATCC 9790 / DSM 20160 / JCM 8729 / LMG 6399 / NBRC 3181 / NCIMB 6459 / NCDO 1258 / NCTC 12367 / WDCM 00089 / R) protein is Potassium/sodium uptake protein NtpJ (ntpJ).